A 93-amino-acid polypeptide reads, in one-letter code: Early nodulin-12A (93 aa).

The first 24 residues, methionine 1–alanine 24, serve as a signal peptide directing secretion. The tract at residues proline 30 to phenylalanine 93 is disordered. 10 repeat units span residues proline 34–glutamate 38, proline 39–lysine 43, proline 44–glutamate 48, proline 49–lysine 53, proline 54–aspartate 58, proline 59–lysine 63, proline 64–glutamate 68, proline 69–lysine 73, proline 74–glutamate 78, and proline 79–arginine 83. The interval proline 34–arginine 83 is 10 X 5 AA tandem repeats of P-P-[HQVRT]-[HKNT]-[DEKR]. Residues histidine 46–phenylalanine 93 show a composition bias toward basic and acidic residues.

It belongs to the plant proline-rich protein superfamily. ENOD12 family. As to expression, more abundant in the young nodules than the mature nodules.

Its subcellular location is the secreted. It localises to the cell wall. Functionally, involved in the infection process during the plant-rhizobium interaction. The sequence is that of Early nodulin-12A (ENOD12A) from Medicago sativa (Alfalfa).